We begin with the raw amino-acid sequence, 672 residues long: Spermatid perinuclear RNA-binding protein (672 aa).

In terms of domain architecture, DZF spans 5-363 (RSFANDDRHV…ALKRPFEDGL (359 aa)). Positions 349-371 (GAGSSALKRPFEDGLGDDKDPNK) are disordered. Positions 357 to 371 (RPFEDGLGDDKDPNK) are enriched in basic and acidic residues. Positions 387-453 (DLMNALMRLN…AVKVLQAMGY (67 aa)) constitute a DRBM 1 domain. Positions 467–476 (DEKSDNESKN) are enriched in basic and acidic residues. The interval 467-514 (DEKSDNESKNDTVSSNSSNNTGNSTTETSSTLEVRTQGPILTASGKNP) is disordered. A compositionally biased stretch (low complexity) spans 477–497 (DTVSSNSSNNTGNSTTETSST). A DRBM 2 domain is found at 510-576 (SGKNPVMELN…ALAALEKLFS (67 aa)). An asymmetric dimethylarginine mark is found at Arg-612 and Arg-617.

As to quaternary structure, interacts with EIF2AK2. Associates with microtubules; it is unsure whether such interaction is direct or indirect. Isoform 2 is expressed in spermatocytes (at protein level). Expressed in testis, thymus, ovary, liver, kidney, heart, spleen and brain. Expressed in cortex, dentate gyrus and Purkinje cell layer and granule cells of the cerebellum.

It localises to the cytoplasm. The protein resides in the cytoskeleton. Involved in spermatogenesis and sperm function. Plays a role in regulation of cell growth. Binds to double-stranded DNA and RNA. Binds most efficiently to poly(I:C) RNA than to poly(dI:dC) DNA. Also binds to single-stranded poly(G) RNA. Binds non-specifically to the mRNA PRM1 3'-UTR and adenovirus VA RNA. The sequence is that of Spermatid perinuclear RNA-binding protein (Strbp) from Mus musculus (Mouse).